A 1314-amino-acid polypeptide reads, in one-letter code: E3 ubiquitin-protein ligase RNF123 (1314 aa).

Alanine 2 is subject to N-acetylalanine. The B30.2/SPRY domain occupies 74-254 (VDSEDEESQG…VAFNFGSRPL (181 aa)). The interval 460–481 (HRSSREGKDSAEDRAEAAEERP) is disordered. Over residues 462–481 (SSREGKDSAEDRAEAAEERP) the composition is skewed to basic and acidic residues. Serine 675 bears the Phosphoserine mark. Arginine 683 carries the asymmetric dimethylarginine modification. The interval 968 to 974 (WILVRLW) is interaction with NFKB1. Zn(2+) is bound by residues cysteine 1254, cysteine 1257, cysteine 1269, histidine 1271, cysteine 1274, cysteine 1277, cysteine 1288, and cysteine 1291. An RING-type zinc finger spans residues 1254-1292 (CPICYAHPISAVFQPCGHKSCKACIDQHLMNNKDCFFCK).

In terms of assembly, component of the KPC complex composed of RNF123/KPC1 and UBAC1/KPC2. Interacts with UBAC1 and CDKN1B via its N-terminal domain. Interacts with RIGI (via N-terminus) and IFIH1 (via N-terminus). Ubiquitinated, leading to its degradation. Deubiquitinated by USP19, thereby stimulating CDKN1B ubiquitin-dependent degradation.

Its subcellular location is the cytoplasm. The catalysed reaction is S-ubiquitinyl-[E2 ubiquitin-conjugating enzyme]-L-cysteine + [acceptor protein]-L-lysine = [E2 ubiquitin-conjugating enzyme]-L-cysteine + N(6)-ubiquitinyl-[acceptor protein]-L-lysine.. It participates in protein modification; protein ubiquitination. In terms of biological role, catalytic subunit of the KPC complex that acts as E3 ubiquitin-protein ligase. Promotes the ubiquitination and proteasome-mediated degradation of CDKN1B which is the cyclin-dependent kinase inhibitor at the G0-G1 transition of the cell cycle. Also acts as a key regulator of the NF-kappa-B signaling by promoting maturation of the NFKB1 component of NF-kappa-B. Acts by catalyzing ubiquitination of the NFKB1 p105 precursor, leading to limited proteasomal degradation of NFKB1 p105 and generation of the active NFKB1 p50 subunit. Functions also as an inhibitor of innate antiviral signaling mediated by RIGI and IFIH1 independently of its E3 ligase activity. Interacts with the N-terminal CARD domains of RIGI and IFIH1 and competes with the downstream adapter MAVS. This Oryctolagus cuniculus (Rabbit) protein is E3 ubiquitin-protein ligase RNF123.